The chain runs to 120 residues: UPF0231 protein YacL (120 aa).

Belongs to the UPF0231 family.

The chain is UPF0231 protein YacL from Escherichia fergusonii (strain ATCC 35469 / DSM 13698 / CCUG 18766 / IAM 14443 / JCM 21226 / LMG 7866 / NBRC 102419 / NCTC 12128 / CDC 0568-73).